The chain runs to 329 residues: Serpentine receptor class alpha-8 (329 aa).

6 consecutive transmembrane segments (helical) span residues V26 to L46, F60 to I80, I141 to L161, T187 to L207, V231 to I251, and F273 to I293.

It belongs to the nematode receptor-like protein sra family.

Its subcellular location is the membrane. The polypeptide is Serpentine receptor class alpha-8 (sra-8) (Caenorhabditis elegans).